The chain runs to 182 residues: Ribosome maturation factor RimM (182 aa).

A PRC barrel domain is found at 102–182; it reads EEGDYYWKDL…TIEVDWDPGF (81 aa).

This sequence belongs to the RimM family. In terms of assembly, binds ribosomal protein uS19.

The protein localises to the cytoplasm. An accessory protein needed during the final step in the assembly of 30S ribosomal subunit, possibly for assembly of the head region. Essential for efficient processing of 16S rRNA. May be needed both before and after RbfA during the maturation of 16S rRNA. It has affinity for free ribosomal 30S subunits but not for 70S ribosomes. The sequence is that of Ribosome maturation factor RimM from Klebsiella pneumoniae (strain 342).